A 298-amino-acid chain; its full sequence is Protoheme IX farnesyltransferase (298 aa).

The next 9 membrane-spanning stretches (helical) occupy residues 16 to 36 (VVAL…PDMP), 45 to 65 (ALGF…NQLL), 93 to 113 (VFAG…VNVI), 114 to 134 (TAVL…VYLK), 141 to 161 (IVIG…AVTG), 172 to 192 (SLLV…LAIF), 223 to 243 (VLLA…VFYL), 244 to 264 (GGAV…LNPP), and 277 to 297 (IVYL…LPWV).

Belongs to the UbiA prenyltransferase family. Protoheme IX farnesyltransferase subfamily.

The protein localises to the cell inner membrane. It catalyses the reaction heme b + (2E,6E)-farnesyl diphosphate + H2O = Fe(II)-heme o + diphosphate. It participates in porphyrin-containing compound metabolism; heme O biosynthesis; heme O from protoheme: step 1/1. Converts heme B (protoheme IX) to heme O by substitution of the vinyl group on carbon 2 of heme B porphyrin ring with a hydroxyethyl farnesyl side group. The protein is Protoheme IX farnesyltransferase of Xanthomonas oryzae pv. oryzae (strain MAFF 311018).